A 498-amino-acid polypeptide reads, in one-letter code: NADPH:adrenodoxin oxidoreductase, mitochondrial (498 aa).

A mitochondrion-targeting transit peptide spans 1 to 37 (MSTHKAALCKVQILKLFLISARCVRITRFYGVCGLST). Ala-54, Glu-75, Leu-83, and Val-119 together coordinate FAD. NADP(+)-binding positions include 190-193 (QGNV), 234-235 (RR), and Glu-246. FAD contacts are provided by residues Trp-404 and 411 to 413 (GVI). Gly-411 serves as a coordination point for NADP(+). Residues 469–488 (DSEETRRGETRGKPREKMLD) show a composition bias toward basic and acidic residues. The disordered stretch occupies residues 469–489 (DSEETRRGETRGKPREKMLDV).

This sequence belongs to the ferredoxin--NADP reductase type 1 family. FAD is required as a cofactor.

Its subcellular location is the mitochondrion inner membrane. It carries out the reaction 2 reduced [adrenodoxin] + NADP(+) + H(+) = 2 oxidized [adrenodoxin] + NADPH. It participates in steroid metabolism; cholesterol metabolism. Serves as the first electron transfer protein in all the mitochondrial P450 systems including cholesterol side chain cleavage in all steroidogenic tissues, steroid 11-beta hydroxylation in the adrenal cortex, 25-OH-vitamin D3-24 hydroxylation in the kidney, and sterol C-27 hydroxylation in the liver. This chain is NADPH:adrenodoxin oxidoreductase, mitochondrial (fdxr), found in Salvelinus fontinalis (Brook trout).